Consider the following 88-residue polypeptide: Large ribosomal subunit protein eL34 (88 aa).

It belongs to the eukaryotic ribosomal protein eL34 family.

The polypeptide is Large ribosomal subunit protein eL34 (Saccharolobus solfataricus (strain ATCC 35092 / DSM 1617 / JCM 11322 / P2) (Sulfolobus solfataricus)).